A 1077-amino-acid chain; its full sequence is Carbamoyl phosphate synthase large chain (1077 aa).

Residues 2–403 (PKRTDIKSIL…SLQKALRGLE (402 aa)) form a carboxyphosphate synthetic domain region. ATP is bound by residues arginine 129, arginine 169, glycine 175, glycine 176, glutamate 208, leucine 210, glutamate 215, glycine 241, isoleucine 242, histidine 243, glutamine 285, and glutamate 299. The 196-residue stretch at 133–328 (DIAMKKIGLD…IAKIAAKLAV (196 aa)) folds into the ATP-grasp 1 domain. Glutamine 285, glutamate 299, and asparagine 301 together coordinate Mg(2+). Mn(2+)-binding residues include glutamine 285, glutamate 299, and asparagine 301. The interval 404-553 (VGATGFDPKV…YSTYEEECES (150 aa)) is oligomerization domain. A carbamoyl phosphate synthetic domain region spans residues 554–936 (NPTSDRPKVM…AFSKAMLGSQ (383 aa)). The region spanning 679–870 (QQAVNRLGLK…LAKIAARVMV (192 aa)) is the ATP-grasp 2 domain. Residues arginine 715, arginine 754, leucine 756, glutamate 761, glycine 786, valine 787, histidine 788, serine 789, glutamine 829, and glutamate 841 each contribute to the ATP site. Positions 829, 841, and 843 each coordinate Mg(2+). Mn(2+) is bound by residues glutamine 829, glutamate 841, and asparagine 843. In terms of domain architecture, MGS-like spans 937–1077 (SGMKKSGRAL…MHAKIKNMKA (141 aa)). Residues 937 to 1077 (SGMKKSGRAL…MHAKIKNMKA (141 aa)) form an allosteric domain region.

The protein belongs to the CarB family. In terms of assembly, composed of two chains; the small (or glutamine) chain promotes the hydrolysis of glutamine to ammonia, which is used by the large (or ammonia) chain to synthesize carbamoyl phosphate. Tetramer of heterodimers (alpha,beta)4. Mg(2+) serves as cofactor. The cofactor is Mn(2+).

The enzyme catalyses hydrogencarbonate + L-glutamine + 2 ATP + H2O = carbamoyl phosphate + L-glutamate + 2 ADP + phosphate + 2 H(+). The catalysed reaction is hydrogencarbonate + NH4(+) + 2 ATP = carbamoyl phosphate + 2 ADP + phosphate + 2 H(+). Its pathway is amino-acid biosynthesis; L-arginine biosynthesis; carbamoyl phosphate from bicarbonate: step 1/1. The protein operates within pyrimidine metabolism; UMP biosynthesis via de novo pathway; (S)-dihydroorotate from bicarbonate: step 1/3. In terms of biological role, large subunit of the glutamine-dependent carbamoyl phosphate synthetase (CPSase). CPSase catalyzes the formation of carbamoyl phosphate from the ammonia moiety of glutamine, carbonate, and phosphate donated by ATP, constituting the first step of 2 biosynthetic pathways, one leading to arginine and/or urea and the other to pyrimidine nucleotides. The large subunit (synthetase) binds the substrates ammonia (free or transferred from glutamine from the small subunit), hydrogencarbonate and ATP and carries out an ATP-coupled ligase reaction, activating hydrogencarbonate by forming carboxy phosphate which reacts with ammonia to form carbamoyl phosphate. The protein is Carbamoyl phosphate synthase large chain of Yersinia pestis.